The primary structure comprises 271 residues: Putative two-component membrane permease complex subunit SMU_746c (271 aa).

Transmembrane regions (helical) follow at residues 34–54 (LAYISMALSFILALVQLTIWM) and 70–90 (FFSPIILAIPVFIGLLVPTVP).

The protein belongs to the UPF0703 family. As to quaternary structure, interacts with SMU_747c.

It is found in the cell membrane. Its function is as follows. Could be part of a two-component membrane permease system responsible for amino acid transport under low pH. Involved in acidogenesis, biofilm formation and low-pH survival. The protein is Putative two-component membrane permease complex subunit SMU_746c of Streptococcus mutans serotype c (strain ATCC 700610 / UA159).